The sequence spans 230 residues: Protein-L-isoaspartate O-methyltransferase (230 aa).

The active site involves S65.

The protein belongs to the methyltransferase superfamily. L-isoaspartyl/D-aspartyl protein methyltransferase family. In terms of assembly, monomer. In terms of tissue distribution, highest contents in seeds.

It localises to the cytoplasm. It catalyses the reaction [protein]-L-isoaspartate + S-adenosyl-L-methionine = [protein]-L-isoaspartate alpha-methyl ester + S-adenosyl-L-homocysteine. Its function is as follows. Catalyzes the methyl esterification of L-isoaspartyl residues in peptides and proteins that result from spontaneous decomposition of normal L-aspartyl and L-asparaginyl residues. It plays a role in the repair and/or degradation of damaged proteins. This enzyme does not act on D-aspartyl residues. This chain is Protein-L-isoaspartate O-methyltransferase (PCM), found in Triticum aestivum (Wheat).